The chain runs to 518 residues: Retinal dehydrogenase 2 (518 aa).

A Phosphotyrosine modification is found at Y168. NAD(+) is bound by residues 184 to 186, 210 to 213, and 264 to 266; these read IPW, KPAE, and STE. E286 acts as the Proton acceptor in catalysis. C320 functions as the Nucleophile in the catalytic mechanism. At S351 the chain carries Phosphoserine. Residues 366-370 and E417 contribute to the NAD(+) site; that span reads KQYNK.

This sequence belongs to the aldehyde dehydrogenase family. As to quaternary structure, homotetramer. As to expression, found in testis and less abundantly in lung, brain, heart, liver and kidney.

It is found in the cytoplasm. The catalysed reaction is retinal + NAD(+) + H2O = retinoate + NADH + 2 H(+). The enzyme catalyses all-trans-retinal + NAD(+) + H2O = all-trans-retinoate + NADH + 2 H(+). It catalyses the reaction all-trans-13,14-dihydroretinal + NAD(+) + H2O = all-trans-13,14-dihydroretinoate + NADH + 2 H(+). The protein operates within cofactor metabolism; retinol metabolism. Catalyzes the NAD-dependent oxidation of aldehyde substrates, such as all-trans-retinal and all-trans-13,14-dihydroretinal, to their corresponding carboxylic acids, all-trans-retinoate and all-trans-13,14-dihydroretinoate, respectively. Retinoate signaling is critical for the transcriptional control of many genes, for instance it is crucial for initiation of meiosis in both male and female. Recognizes retinal as substrate, both in its free form and when bound to cellular retinol-binding protein. Lacks activity with benzaldehyde, acetaldehyde and octanal. Displays complete lack of activity with citral. This Rattus norvegicus (Rat) protein is Retinal dehydrogenase 2 (Aldh1a2).